Consider the following 454-residue polypeptide: Lamina-associated polypeptide 2, isoforms beta/gamma (454 aa).

Positions 1 to 410 (MPEFLEDPSV…KSEKTKKGRS (410 aa)) are nucleoplasmic. Residues 5 to 48 (LEDPSVLTKDKLKSELVANNVTLPAGEQRKDVYVQLYLQHLTAR) enclose the LEM-like domain. 2 disordered regions span residues 47–117 (ARNR…ELTN) and 149–265 (LREQ…VETS). The tract at residues 49–108 (NRPPLPAGTNSKGPPDFSSDEEREPTPVLGSGAAAAGRSRAAVGRKATKKTDKPRQEDKD) is linker. Residue Thr57 is modified to Phosphothreonine. A phosphoserine mark is found at Ser59, Ser66, and Ser67. A Phosphothreonine modification is found at Thr74. Over residues 78–93 (GSGAAAAGRSRAAVGR) the composition is skewed to low complexity. Ser79 bears the Phosphoserine mark. Omega-N-methylarginine occurs at positions 86 and 88. Over residues 97–106 (KKTDKPRQED) the composition is skewed to basic and acidic residues. Residues 107-117 (KDDLDVTELTN) show a composition bias toward acidic residues. Residues 109 to 153 (DLDVTELTNEDLLDQLVKYGVNPGPIVGTTRKLYEKKLLKLREQG) enclose the LEM domain. The segment at 138-243 (TRKLYEKKLL…TSGSSKGGPL (106 aa)) is NAKAP95-binding N. Position 154 is a phosphothreonine (Thr154). Residues 155–178 (ESRSSTPLPTISSSAENTRQNGSN) are compositionally biased toward polar residues. Residues Ser156 and Ser159 each carry the phosphoserine modification. Phosphothreonine occurs at positions 160 and 164. Phosphoserine is present on residues Ser166, Ser168, Ser177, Ser180, Ser184, and Ser190. The span at 179–203 (DSDRYSDNEEDSKIELKLEKREPLK) shows a compositional bias: basic and acidic residues. Lys207 bears the N6-acetyllysine mark. Thr211 bears the Phosphothreonine mark. The span at 220-237 (NQSYSQAGITETEWTSGS) shows a compositional bias: polar residues. A phosphoserine mark is found at Ser222, Ser224, Ser250, Ser254, Ser265, Ser292, and Ser306. A binds lamins B region spans residues 299 to 371 (TGNFKHASPI…SCRRPIKGAA (73 aa)). Residues 300–374 (GNFKHASPIL…RPIKGAAGRP (75 aa)) are NAKAP95-binding C. Residue Thr312 is modified to Phosphothreonine. A Phosphoserine modification is found at Ser315. Position 320 is a citrulline (Arg320). Phosphoserine is present on residues Ser362, Ser378, and Ser385. Lys389 is subject to N6-acetyllysine. A Glycyl lysine isopeptide (Lys-Gly) (interchain with G-Cter in SUMO2) cross-link involves residue Lys401. Ser402 carries the post-translational modification Phosphoserine. The chain crosses the membrane as a helical; Signal-anchor for type II membrane protein span at residues 411 to 434 (IPVWIKILLFVVVAVFLFLVYQAM). Over 435-454 (ETNQVNPFSNFLHVDPRKSN) the chain is Lumenal.

The protein belongs to the LEM family. As to quaternary structure, interacts with LMNB1, LMNB2, BANF1, AKAP8L, GMCL and chromosomes. Isoform Zeta interacts with BANF1/BAF and may sequester it in the cytoplasm. In terms of processing, mitosis-specific phosphorylation specifically abolishes its binding to lamin B and chromosomes. Post-translationally, citrullinated by PADI4. Expressed in many tissues. Most abundant in adult thymus and fetal liver.

It localises to the nucleus inner membrane. Its subcellular location is the cytoplasm. Functionally, may help direct the assembly of the nuclear lamina and thereby help maintain the structural organization of the nuclear envelope. Possible receptor for attachment of lamin filaments to the inner nuclear membrane. May be involved in the control of initiation of DNA replication through its interaction with NAKAP95. In terms of biological role, thymopoietin (TP) and Thymopentin (TP5) may play a role in T-cell development and function. TP5 is an immunomodulating pentapeptide. The chain is Lamina-associated polypeptide 2, isoforms beta/gamma (TMPO) from Homo sapiens (Human).